Consider the following 200-residue polypeptide: Serine/threonine-protein kinase mos (200 aa).

Residues 2–200 (LCLLQPLGSG…ELLKGERVTA (199 aa)) form the Protein kinase domain. ATP contacts are provided by residues 8-16 (LGSGGFGSV) and Lys29. The active-site Proton acceptor is Asp143.

Belongs to the protein kinase superfamily. Ser/Thr protein kinase family.

The enzyme catalyses L-seryl-[protein] + ATP = O-phospho-L-seryl-[protein] + ADP + H(+). It catalyses the reaction L-threonyl-[protein] + ATP = O-phospho-L-threonyl-[protein] + ADP + H(+). In Nycticorax nycticorax (Black-crowned night-heron), this protein is Serine/threonine-protein kinase mos (MOS).